Here is a 338-residue protein sequence, read N- to C-terminus: Glyceraldehyde-3-phosphate dehydrogenase (338 aa).

Residues arginine 12–isoleucine 13, aspartate 34, and arginine 80 contribute to the NAD(+) site. Residues serine 151 to threonine 153, threonine 182, threonine 211 to glycine 212, and arginine 234 each bind D-glyceraldehyde 3-phosphate. The Nucleophile role is filled by cysteine 152. Asparagine 316 is an NAD(+) binding site.

This sequence belongs to the glyceraldehyde-3-phosphate dehydrogenase family. As to quaternary structure, homotetramer.

The protein localises to the cytoplasm. It catalyses the reaction D-glyceraldehyde 3-phosphate + phosphate + NAD(+) = (2R)-3-phospho-glyceroyl phosphate + NADH + H(+). The protein operates within carbohydrate degradation; glycolysis; pyruvate from D-glyceraldehyde 3-phosphate: step 1/5. The sequence is that of Glyceraldehyde-3-phosphate dehydrogenase (GPD) from Paracoccidioides lutzii (strain ATCC MYA-826 / Pb01) (Paracoccidioides brasiliensis).